We begin with the raw amino-acid sequence, 876 residues long: Phosphoenolpyruvate carboxylase (876 aa).

Catalysis depends on residues histidine 138 and lysine 543.

It belongs to the PEPCase type 1 family. The cofactor is Mg(2+).

The enzyme catalyses oxaloacetate + phosphate = phosphoenolpyruvate + hydrogencarbonate. Forms oxaloacetate, a four-carbon dicarboxylic acid source for the tricarboxylic acid cycle. This is Phosphoenolpyruvate carboxylase from Pseudomonas fluorescens (strain ATCC BAA-477 / NRRL B-23932 / Pf-5).